Consider the following 396-residue polypeptide: S-adenosylmethionine synthase (396 aa).

H16 lines the ATP pocket. Residue D18 coordinates Mg(2+). E44 is a binding site for K(+). Residues E57 and Q100 each contribute to the L-methionine site. A flexible loop region spans residues 100–110 (QSPDINQGVDR). ATP-binding positions include 165 to 167 (DAK), D240, 246 to 247 (RK), A263, and K267. Position 240 (D240) interacts with L-methionine. K271 contacts L-methionine.

It belongs to the AdoMet synthase family. Homotetramer; dimer of dimers. The cofactor is Mg(2+). Requires K(+) as cofactor.

The protein localises to the cytoplasm. The catalysed reaction is L-methionine + ATP + H2O = S-adenosyl-L-methionine + phosphate + diphosphate. The protein operates within amino-acid biosynthesis; S-adenosyl-L-methionine biosynthesis; S-adenosyl-L-methionine from L-methionine: step 1/1. Functionally, catalyzes the formation of S-adenosylmethionine (AdoMet) from methionine and ATP. The overall synthetic reaction is composed of two sequential steps, AdoMet formation and the subsequent tripolyphosphate hydrolysis which occurs prior to release of AdoMet from the enzyme. This is S-adenosylmethionine synthase from Pseudomonas fluorescens (strain SBW25).